We begin with the raw amino-acid sequence, 375 residues long: Aminomethyltransferase (375 aa).

It belongs to the GcvT family. The glycine cleavage system is composed of four proteins: P, T, L and H.

The enzyme catalyses N(6)-[(R)-S(8)-aminomethyldihydrolipoyl]-L-lysyl-[protein] + (6S)-5,6,7,8-tetrahydrofolate = N(6)-[(R)-dihydrolipoyl]-L-lysyl-[protein] + (6R)-5,10-methylene-5,6,7,8-tetrahydrofolate + NH4(+). Its function is as follows. The glycine cleavage system catalyzes the degradation of glycine. This is Aminomethyltransferase from Cupriavidus pinatubonensis (strain JMP 134 / LMG 1197) (Cupriavidus necator (strain JMP 134)).